A 136-amino-acid chain; its full sequence is Large ribosomal subunit protein uL16c (136 aa).

It belongs to the universal ribosomal protein uL16 family. In terms of assembly, part of the 50S ribosomal subunit.

It localises to the plastid. The protein localises to the chloroplast. This is Large ribosomal subunit protein uL16c from Guizotia abyssinica (Niger).